We begin with the raw amino-acid sequence, 308 residues long: Phenylcoumaran benzylic ether reductase TP7 (308 aa).

NADP(+) contacts are provided by residues 11–17 (GGTGYIG), Arg36, and Lys45. Catalysis depends on Lys133, which acts as the Proton acceptor. Arg137 lines the NADP(+) pocket.

Belongs to the NmrA-type oxidoreductase family. Isoflavone reductase subfamily. Expressed in flowers. Expressed at low levels in stems.

It carries out the reaction (-)-dehydrodiconiferyl alcohol + NADPH + H(+) = (S)-isodihydrodehydrodiconiferyl alcohol + NADP(+). The enzyme catalyses (+)-dehydrodiconiferyl alcohol + NADPH + H(+) = (R)-isodihydrodehydrodiconiferyl alcohol + NADP(+). It catalyses the reaction (2R,3S)-dihydrodehydrodiconiferyl alcohol + NADPH + H(+) = (S)-tetrahydrodehydrodiconiferyl alcohol + NADP(+). The catalysed reaction is (2S,3R)-dihydrodehydrodiconiferyl alcohol + NADPH + H(+) = (R)-tetrahydrodehydrodiconiferyl alcohol + NADP(+). Functionally, oxidoreductase involved in lignan biosynthesis. Catalyzes the NADPH-dependent reduction of phenylcoumaran benzylic ethers. Converts dehydrodiconiferyl alcohol (DDC) to isodihydrodehydrodiconiferyl alcohol (IDDDC), and dihydrodehydrodiconiferyl alcohol (DDDC) to tetrahydrodehydrodiconiferyl alcohol (TDDC). The chain is Phenylcoumaran benzylic ether reductase TP7 from Nicotiana tabacum (Common tobacco).